The primary structure comprises 203 residues: Transcriptional regulator GfcR (203 aa).

Belongs to the purine/pyrimidine phosphoribosyltransferase family. GfcR subfamily.

This Methanothrix thermoacetophila (strain DSM 6194 / JCM 14653 / NBRC 101360 / PT) (Methanosaeta thermophila) protein is Transcriptional regulator GfcR.